The chain runs to 408 residues: Lysosomal phospholipase A and acyltransferase (408 aa).

Residues 1 to 31 form the signal peptide; that stretch reads MGLRRGPCPAALLPGGFLFLLLLADPALLAG. Asp-42 is a binding site for substrate. Cys-61 and Cys-85 are joined by a disulfide. Asn-95 is a glycosylation site (N-linked (GlcNAc...) asparagine). Ser-194 functions as the Acyl-ester intermediate in the catalytic mechanism. Residue Ser-194 participates in Zn(2+) binding. Met-195 contributes to the substrate binding site. Residues Asn-269 and Asn-285 are each glycosylated (N-linked (GlcNAc...) asparagine). The Zn(2+) site is built by Asp-336 and Cys-351. Active-site charge relay system residues include Asp-356 and His-388. His-388 is a binding site for Zn(2+). Residue Asn-394 is glycosylated (N-linked (GlcNAc...) asparagine).

It belongs to the AB hydrolase superfamily. Lipase family. N-glycosylated. N-glycosylation is important for maturation of the enzyme and normal subcellular location.

It localises to the secreted. It is found in the lysosome. The protein localises to the membrane. The enzyme catalyses a 1,2-diacyl-sn-glycero-3-phosphocholine + H2O = a 2-acyl-sn-glycero-3-phosphocholine + a fatty acid + H(+). It catalyses the reaction 1-hexadecanoyl-2-(9Z-octadecenoyl)-sn-glycero-3-phosphocholine + H2O = 2-(9Z-octadecenoyl)-sn-glycero-3-phosphocholine + hexadecanoate + H(+). It carries out the reaction 1,2-di-(9Z-octadecenoyl)-sn-glycero-3-phosphocholine + H2O = 2-(9Z-octadecenoyl)-sn-glycero-3-phosphocholine + (9Z)-octadecenoate + H(+). The catalysed reaction is 1-hexadecanoyl-2-glutaroyl-sn-glycero-3-phosphocholine + H2O = 2-glutaroyl-sn-glycero-3-phosphocholine + hexadecanoate + H(+). The enzyme catalyses 1-hexadecanoyl-2-nonadioyl-sn-glycero-3-phosphocholine + H2O = 2-nonadioyl-sn-glycero-3-phosphocholine + hexadecanoate + H(+). It catalyses the reaction 1-hexadecanoyl-2-(5-oxopentanoyl)-sn-glycero-3-phosphocholine + H2O = 2-(5-oxopentanoyl)-sn-glycero-3-phosphocholine + hexadecanoate + H(+). It carries out the reaction 1-hexadecanoyl-2-(9-oxononanoyl)-sn-glycero-3-phosphocholine + H2O = 2-(9-oxononanoyl)-sn-glycero-3-phosphocholine + hexadecanoate + H(+). The catalysed reaction is 1,2-dihexadecanoyl-sn-glycero-3-phosphocholine + H2O = 2-hexadecanoyl-sn-glycero-3-phosphocholine + hexadecanoate + H(+). The enzyme catalyses a 1,2-diacyl-sn-glycero-3-phosphocholine + H2O = a 1-acyl-sn-glycero-3-phosphocholine + a fatty acid + H(+). It catalyses the reaction 1-hexadecanoyl-2-(9Z-octadecenoyl)-sn-glycero-3-phosphocholine + H2O = 1-hexadecanoyl-sn-glycero-3-phosphocholine + (9Z)-octadecenoate + H(+). It carries out the reaction 1,2-di-(9Z-octadecenoyl)-sn-glycero-3-phosphocholine + H2O = 1-(9Z-octadecenoyl)-sn-glycero-3-phosphocholine + (9Z)-octadecenoate + H(+). The catalysed reaction is 1,2-dihexadecanoyl-sn-glycero-3-phosphocholine + H2O = 1-hexadecanoyl-sn-glycero-3-phosphocholine + hexadecanoate + H(+). The enzyme catalyses a 1-acyl-sn-glycero-3-phosphocholine + H2O = sn-glycerol 3-phosphocholine + a fatty acid + H(+). It catalyses the reaction 1-hexadecanoyl-sn-glycero-3-phosphocholine + H2O = sn-glycerol 3-phosphocholine + hexadecanoate + H(+). It carries out the reaction N-(acetyl)-sphing-4-enine + a 1,2-diacyl-sn-glycero-3-phosphoethanolamine = 1-O-acyl-N-(acetyl)-sphing-4-enine + a 2-acyl-sn-glycero-3-phosphoethanolamine. The catalysed reaction is 1-hexadecanoyl-2-(9Z-octadecenoyl)-sn-glycero-3-phosphoethanolamine + N-(acetyl)-sphing-4-enine = 2-(9Z-octadecenoyl)-sn-glycero-3-phosphoethanolamine + 1-hexadecanoyl-N-(acetyl)-sphing-4-enine. The enzyme catalyses 1-hexadecanoyl-2-(9Z,12Z-octadecadienoyl)-sn-glycero-3-phosphoethanolamine + N-(acetyl)-sphing-4-enine = 2-(9Z,12Z)-octadecadienoyl-sn-glycero-3-phosphoethanolamine + 1-hexadecanoyl-N-(acetyl)-sphing-4-enine. It catalyses the reaction 1-hexadecanoyl-2-(5Z,8Z,11Z,14Z-eicosatetraenoyl)-sn-glycero-3-phosphoethanolamine + N-(acetyl)-sphing-4-enine = 2-(5Z,8Z,11Z,14Z)-eicosatetraenoyl-sn-glycero-3-phosphoethanolamine + 1-hexadecanoyl-N-(acetyl)-sphing-4-enine. It carries out the reaction N-(acetyl)-sphing-4-enine + a 1,2-diacyl-sn-glycero-3-phosphoethanolamine = 1-O-acyl-N-(acetyl)-sphing-4-enine + a 1-acyl-sn-glycero-3-phosphoethanolamine. The catalysed reaction is 1-hexadecanoyl-2-(9Z-octadecenoyl)-sn-glycero-3-phosphoethanolamine + N-(acetyl)-sphing-4-enine = 1-(9Z-octadecenoyl)-N-(acetyl)-sphing-4-enine + 1-hexadecanoyl-sn-glycero-3-phosphoethanolamine. The enzyme catalyses 1-hexadecanoyl-2-(9Z,12Z-octadecadienoyl)-sn-glycero-3-phosphoethanolamine + N-(acetyl)-sphing-4-enine = 1-(9Z,12Z-octadecadienoyl)-N-acetylsphing-4-enine + 1-hexadecanoyl-sn-glycero-3-phosphoethanolamine. It catalyses the reaction 1-hexadecanoyl-2-(5Z,8Z,11Z,14Z-eicosatetraenoyl)-sn-glycero-3-phosphoethanolamine + N-(acetyl)-sphing-4-enine = 1-(5Z,8Z,11Z,14Z)-eicosatetraenoyl-N-(acetyl)-sphing-4-enine + 1-hexadecanoyl-sn-glycero-3-phosphoethanolamine. It carries out the reaction N-(acetyl)-sphing-4-enine + a 1,2-diacyl-sn-glycero-3-phosphocholine = 1-O-acyl-N-(acetyl)-sphing-4-enine + a 2-acyl-sn-glycero-3-phosphocholine. The catalysed reaction is 1-hexadecanoyl-2-(9Z-octadecenoyl)-sn-glycero-3-phosphocholine + N-(acetyl)-sphing-4-enine = 1-hexadecanoyl-N-(acetyl)-sphing-4-enine + 2-(9Z-octadecenoyl)-sn-glycero-3-phosphocholine. The enzyme catalyses 1-hexadecanoyl-2-(9Z,12Z-octadecadienoyl)-sn-glycero-3-phosphocholine + N-(acetyl)-sphing-4-enine = 2-(9Z,12Z-octadecadienoyl)-sn-glycero-3-phosphocholine + 1-hexadecanoyl-N-(acetyl)-sphing-4-enine. It catalyses the reaction 1-hexadecanoyl-2-(5Z,8Z,11Z,14Z-eicosatetraenoyl)-sn-glycero-3-phosphocholine + N-(acetyl)-sphing-4-enine = 1-hexadecanoyl-N-(acetyl)-sphing-4-enine + 2-(5Z,8Z,11Z,14Z)-eicosatetraenoyl-sn-glycero-3-phosphocholine. It carries out the reaction 1-hexadecanoyl-2-(4Z,7Z,10Z,13Z,16Z,19Z-docosahexaenoyl)-sn-glycero-3-phosphocholine + N-(acetyl)-sphing-4-enine = 2-(4Z,7Z,10Z,13Z,16Z,19Z-docosahexaenoyl)-sn-glycero-3-phosphocholine + 1-hexadecanoyl-N-(acetyl)-sphing-4-enine. The catalysed reaction is 1-hexadecanoyl-2-nonadioyl-sn-glycero-3-phosphocholine + N-(acetyl)-sphing-4-enine = 2-nonadioyl-sn-glycero-3-phosphocholine + 1-hexadecanoyl-N-(acetyl)-sphing-4-enine. The enzyme catalyses 1-octadecanoyl-2-(9Z-octadecenoyl)-sn-glycero-3-phosphocholine + N-(acetyl)-sphing-4-enine = 1-octadecanoyl-N-(acetyl)-sphing-4-enine + 2-(9Z-octadecenoyl)-sn-glycero-3-phosphocholine. It catalyses the reaction 1-(9Z)-octadecenoyl-2-octadecanoyl-sn-glycero-3-phosphocholine + N-(acetyl)-sphing-4-enine = 2-octadecanoyl-sn-glycero-3-phosphocholine + 1-(9Z-octadecenoyl)-N-(acetyl)-sphing-4-enine. It carries out the reaction 1-octadecanoyl-2-(5Z,8Z,11Z,14Z-eicosatetraenoyl)-sn-glycero-3-phosphocholine + N-(acetyl)-sphing-4-enine = 1-octadecanoyl-N-(acetyl)-sphing-4-enine + 2-(5Z,8Z,11Z,14Z)-eicosatetraenoyl-sn-glycero-3-phosphocholine. The catalysed reaction is 1-(9Z-octadecenoyl)-2-hexadecanoyl-sn-glycero-3-phosphocholine + N-(acetyl)-sphing-4-enine = 1-(9Z-octadecenoyl)-N-(acetyl)-sphing-4-enine + 2-hexadecanoyl-sn-glycero-3-phosphocholine. The enzyme catalyses N-(acetyl)-sphing-4-enine + a 1,2-diacyl-sn-glycero-3-phosphocholine = 1-O-acyl-N-(acetyl)-sphing-4-enine + a 1-acyl-sn-glycero-3-phosphocholine. It catalyses the reaction 1-hexadecanoyl-2-(9Z-octadecenoyl)-sn-glycero-3-phosphocholine + N-(acetyl)-sphing-4-enine = 1-(9Z-octadecenoyl)-N-(acetyl)-sphing-4-enine + 1-hexadecanoyl-sn-glycero-3-phosphocholine. It carries out the reaction 1-hexadecanoyl-2-(9Z,12Z-octadecadienoyl)-sn-glycero-3-phosphocholine + N-(acetyl)-sphing-4-enine = 1-(9Z,12Z-octadecadienoyl)-N-acetylsphing-4-enine + 1-hexadecanoyl-sn-glycero-3-phosphocholine. The catalysed reaction is 1-hexadecanoyl-2-(5Z,8Z,11Z,14Z-eicosatetraenoyl)-sn-glycero-3-phosphocholine + N-(acetyl)-sphing-4-enine = 1-(5Z,8Z,11Z,14Z)-eicosatetraenoyl-N-(acetyl)-sphing-4-enine + 1-hexadecanoyl-sn-glycero-3-phosphocholine. The enzyme catalyses 1-hexadecanoyl-2-(4Z,7Z,10Z,13Z,16Z,19Z-docosahexaenoyl)-sn-glycero-3-phosphocholine + N-(acetyl)-sphing-4-enine = 1-(4Z,7Z,10Z,13Z,16Z,19Z-docosahexaenoyl)-N-(acetyl)-sphing-4-enine + 1-hexadecanoyl-sn-glycero-3-phosphocholine. It catalyses the reaction 1-octadecanoyl-2-(9Z-octadecenoyl)-sn-glycero-3-phosphocholine + N-(acetyl)-sphing-4-enine = 1-(9Z-octadecenoyl)-N-(acetyl)-sphing-4-enine + 1-octadecanoyl-sn-glycero-3-phosphocholine. It carries out the reaction 1-octadecanoyl-2-(9Z,12Z)-octadecadienoyl-sn-glycero-3-phosphocholine + N-(acetyl)-sphing-4-enine = 1-(9Z,12Z-octadecadienoyl)-N-acetylsphing-4-enine + 1-octadecanoyl-sn-glycero-3-phosphocholine. The catalysed reaction is 1-(9Z-octadecenoyl)-2-hexadecanoyl-sn-glycero-3-phosphocholine + N-(acetyl)-sphing-4-enine = 1-hexadecanoyl-N-(acetyl)-sphing-4-enine + 1-(9Z-octadecenoyl)-sn-glycero-3-phosphocholine. The enzyme catalyses 1-(9Z)-octadecenoyl-2-octadecanoyl-sn-glycero-3-phosphocholine + N-(acetyl)-sphing-4-enine = 1-octadecanoyl-N-(acetyl)-sphing-4-enine + 1-(9Z-octadecenoyl)-sn-glycero-3-phosphocholine. It catalyses the reaction 1,2-di-(9Z-octadecenoyl)-sn-glycero-3-phosphocholine + N-(acetyl)-sphing-4-enine = 1-(9Z-octadecenoyl)-N-(acetyl)-sphing-4-enine + 1-(9Z-octadecenoyl)-sn-glycero-3-phosphocholine. It carries out the reaction 1-octadecanoyl-2-(5Z,8Z,11Z,14Z-eicosatetraenoyl)-sn-glycero-3-phosphocholine + N-(acetyl)-sphing-4-enine = 1-(5Z,8Z,11Z,14Z)-eicosatetraenoyl-N-(acetyl)-sphing-4-enine + 1-octadecanoyl-sn-glycero-3-phosphocholine. The catalysed reaction is a 1,2-diacyl-sn-glycero-3-phospho-L-serine + N-(acetyl)-sphing-4-enine = a 2-acyl-sn-glycero-3-phospho-L-serine + 1-O-acyl-N-(acetyl)-sphing-4-enine. The enzyme catalyses 1-octadecanoyl-2-(9Z-octadecenoyl)-sn-glycero-3-phospho-L-serine + N-(acetyl)-sphing-4-enine = 2-(9Z-octadecenoyl)-sn-glycero-3-phospho-L-serine + 1-octadecanoyl-N-(acetyl)-sphing-4-enine. It catalyses the reaction a 1,2-diacyl-sn-glycero-3-phospho-L-serine + N-(acetyl)-sphing-4-enine = 1-O-acyl-N-(acetyl)-sphing-4-enine + a 1-acyl-sn-glycero-3-phospho-L-serine. It carries out the reaction 1-octadecanoyl-2-(9Z-octadecenoyl)-sn-glycero-3-phospho-L-serine + N-(acetyl)-sphing-4-enine = 1-octadecanoyl-sn-glycero-3-phosphoserine + 1-(9Z-octadecenoyl)-N-(acetyl)-sphing-4-enine. The catalysed reaction is a 1,2-diacyl-sn-glycero-3-phospho-(1'-sn-glycerol) + N-(acetyl)-sphing-4-enine = 2-acyl-sn-glycero-3-phospho-(1'-sn-glycerol) + 1-O-acyl-N-(acetyl)-sphing-4-enine. The enzyme catalyses 1-octadecanoyl-2-(9Z-octadecenoyl)-sn-glycero-3-phospho-(1'-sn-glycerol) + N-(acetyl)-sphing-4-enine = 2-(9Z-octadecenoyl)-sn-glycero-3-phospho-(1'-sn-glycerol) + 1-octadecanoyl-N-(acetyl)-sphing-4-enine. It catalyses the reaction a 1,2-diacyl-sn-glycero-3-phospho-(1'-sn-glycerol) + N-(acetyl)-sphing-4-enine = 1-O-acyl-N-(acetyl)-sphing-4-enine + 1-acyl-sn-glycero-3-phospho-(1'-sn-glycerol). It carries out the reaction 1-octadecanoyl-2-(9Z-octadecenoyl)-sn-glycero-3-phospho-(1'-sn-glycerol) + N-(acetyl)-sphing-4-enine = 1-octadecanoyl-sn-glycero-3-phospho-(1'-sn-glycerol) + 1-(9Z-octadecenoyl)-N-(acetyl)-sphing-4-enine. The catalysed reaction is an N-acylethanolamine + a 1,2-diacyl-sn-glycero-3-phosphocholine = 2-(acylamino)ethyl fatty acid + a 2-acyl-sn-glycero-3-phosphocholine. The enzyme catalyses an N-acylethanolamine + a 1,2-diacyl-sn-glycero-3-phosphocholine = 2-(acylamino)ethyl fatty acid + a 1-acyl-sn-glycero-3-phosphocholine. It catalyses the reaction N-(5Z,8Z,11Z,14Z-eicosatetraenoyl)-ethanolamine + 1,2-di-(9Z-octadecenoyl)-sn-glycero-3-phosphocholine = 2-[(5Z,8Z,11Z,14Z)-eicosatetraenoylamino]ethyl (9Z)-octadecenoate + (9Z-octadecenoyl)-sn-glycero-3-phosphocholine. It carries out the reaction N-(9Z-octadecenoyl) ethanolamine + 1,2-di-(9Z-octadecenoyl)-sn-glycero-3-phosphocholine = 2-[(9Z)-octadecenoylamino]ethyl (9Z)-octadecenoate + (9Z-octadecenoyl)-sn-glycero-3-phosphocholine. The catalysed reaction is a 3-acyl-sn-glycerol + a 1,2-diacyl-sn-glycero-3-phosphocholine = a 1,3-diacylglycerol + a 1-acyl-sn-glycero-3-phosphocholine. The enzyme catalyses a 3-acyl-sn-glycerol + a 1,2-diacyl-sn-glycero-3-phosphocholine = a 1,3-diacylglycerol + a 2-acyl-sn-glycero-3-phosphocholine. It catalyses the reaction 3-(9Z-octadecenoyl)-sn-glycerol + 1,2-di-(9Z-octadecenoyl)-sn-glycero-3-phosphocholine = 1,3-di-(9Z-octadecenoyl)-glycerol + (9Z-octadecenoyl)-sn-glycero-3-phosphocholine. It carries out the reaction 3-hexadecanoyl-sn-glycerol + 1,2-di-(9Z-octadecenoyl)-sn-glycero-3-phosphocholine = 1-(9Z)-octadecenoyl-3-hexadecanoyl-sn-glycerol + (9Z-octadecenoyl)-sn-glycero-3-phosphocholine. The catalysed reaction is a 1-acyl-sn-glycerol + a 1,2-diacyl-sn-glycero-3-phosphocholine = a 1,3-diacylglycerol + a 2-acyl-sn-glycero-3-phosphocholine. The enzyme catalyses a 1-acyl-sn-glycerol + a 1,2-diacyl-sn-glycero-3-phosphocholine = a 1,3-diacylglycerol + a 1-acyl-sn-glycero-3-phosphocholine. It catalyses the reaction 1-(9Z-octadecenoyl)-sn-glycerol + 1,2-di-(9Z-octadecenoyl)-sn-glycero-3-phosphocholine = 1,3-di-(9Z-octadecenoyl)-glycerol + (9Z-octadecenoyl)-sn-glycero-3-phosphocholine. It carries out the reaction 1-hexadecanoyl-sn-glycerol + 1,2-di-(9Z-octadecenoyl)-sn-glycero-3-phosphocholine = 1-hexadecanoyl-3-(9Z)-octadecenoyl-sn-glycerol + (9Z-octadecenoyl)-sn-glycero-3-phosphocholine. The catalysed reaction is a 2-acylglycerol + a 1,2-diacyl-sn-glycero-3-phosphocholine = a 1,2-diacylglycerol + a 2-acyl-sn-glycero-3-phosphocholine. The enzyme catalyses a 2-acylglycerol + a 1,2-diacyl-sn-glycero-3-phosphocholine = a 1,2-diacylglycerol + a 1-acyl-sn-glycero-3-phosphocholine. It catalyses the reaction 2-hexadecanoylglycerol + 1,2-di-(9Z-octadecenoyl)-sn-glycero-3-phosphocholine = 1-(9Z)-octadecenoyl-2-hexadecanoylglycerol + (9Z-octadecenoyl)-sn-glycero-3-phosphocholine. It carries out the reaction 1-O-alkylglycerol + a 1,2-diacyl-sn-glycero-3-phosphocholine = 1-O-alkyl-3-acylglycerol + a 1-acyl-sn-glycero-3-phosphocholine. The catalysed reaction is 1-O-alkylglycerol + a 1,2-diacyl-sn-glycero-3-phosphocholine = 1-O-alkyl-3-acylglycerol + a 2-acyl-sn-glycero-3-phosphocholine. The enzyme catalyses 1-O-hexadecylglycerol + 1,2-di-(9Z-octadecenoyl)-sn-glycero-3-phosphocholine = 1-O-hexadecyl-3-(9Z)-octadecenoylglycerol + (9Z-octadecenoyl)-sn-glycero-3-phosphocholine. It catalyses the reaction 1-O-alkyl-2-acyl-sn-glycerol + a 1,2-diacyl-sn-glycero-3-phosphocholine = 1-O-alkyl-2,3-diacyl-sn-glycerol + a 2-acyl-sn-glycero-3-phosphocholine. It carries out the reaction 1-O-alkyl-2-acyl-sn-glycerol + a 1,2-diacyl-sn-glycero-3-phosphocholine = 1-O-alkyl-2,3-diacyl-sn-glycerol + a 1-acyl-sn-glycero-3-phosphocholine. The catalysed reaction is 1-O-hexadecyl-2-acetyl-sn-glycerol + 1,2-di-(9Z-octadecenoyl)-sn-glycero-3-phosphocholine = 1-O-hexadecyl-2-acetyl-3-(9Z)-octadecenoyl-sn-glycerol + (9Z-octadecenoyl)-sn-glycero-3-phosphocholine. The enzyme catalyses 1-O-hexadecyl-2-O-methyl-sn-glycerol + 1,2-di-(9Z-octadecenoyl)-sn-glycero-3-phosphocholine = 1-O-hexadecyl-2-O-methyl-3-(9Z)-octadecenoyl-sn-glycerol + (9Z-octadecenoyl)-sn-glycero-3-phosphocholine. It catalyses the reaction a 1,2-diacyl-sn-glycero-3-phosphoethanolamine + H2O = a 1-acyl-sn-glycero-3-phosphoethanolamine + a fatty acid + H(+). It carries out the reaction 1-acyl-2-(5Z,8Z,11Z,14Z)-eicosatetraenoyl-sn-glycero-3-phosphoethanolamine + H2O = a 1-acyl-sn-glycero-3-phosphoethanolamine + (5Z,8Z,11Z,14Z)-eicosatetraenoate + H(+). The catalysed reaction is a 1,2-diacyl-sn-glycero-3-phospho-(1'-sn-glycerol) + H2O = 1-acyl-sn-glycero-3-phospho-(1'-sn-glycerol) + a fatty acid + H(+). The enzyme catalyses 1-hexadecanoyl-2-(9Z-octadecenoyl)-sn-glycero-3-phospho-(1'-sn-glycerol) + H2O = 1-hexadecanoyl-sn-glycero-3-phospho-(1'-sn-glycerol) + (9Z)-octadecenoate + H(+). It catalyses the reaction a 1,2-diacyl-sn-glycero-3-phospho-(1'-sn-glycerol) + H2O = 2-acyl-sn-glycero-3-phospho-(1'-sn-glycerol) + a fatty acid + H(+). It carries out the reaction 1-hexadecanoyl-2-(9Z-octadecenoyl)-sn-glycero-3-phospho-(1'-sn-glycerol) + H2O = 2-(9Z-octadecenoyl)-sn-glycero-3-phospho-(1'-sn-glycerol) + hexadecanoate + H(+). In terms of biological role, has dual calcium-independent phospholipase and O-acyltransferase activities with a potential role in glycerophospholipid homeostasis and remodeling of acyl groups of lipophilic alcohols present in acidic cellular compartments. Catalyzes hydrolysis of the ester bond of the fatty acyl group attached at sn-1 or sn-2 position of phospholipids (phospholipase A1 or A2 activity) and transfer it to the hydroxyl group at the first carbon of lipophilic alcohols (O-acyltransferase activity). Among preferred fatty acyl donors are phosphatidylcholines, phosphatidylethanolamines, phosphatidylglycerols and phosphatidylserines. Favors sn-2 over sn-1 deacylation of unsaturated fatty acyl groups of phosphatidylcholines, phosphatidylethanolamines, and phosphatidylglycerols. Among preferred fatty acyl acceptors are natural lipophilic alcohols including short-chain ceramide N-acetyl-sphingosine (C2 ceramide), alkylacylglycerols, monoacylglycerols, and acylethanolamides such as anandamide and oleoylethanolamide. Selectively hydrolyzes the sn-1 fatty acyl group of truncated oxidized phospholipids and may play a role in detoxification of reactive oxidized phospholipids during oxidative stress. Required for normal phospholipid degradation in alveolar macrophages with potential implications in the clearance of pulmonary surfactant, which is mainly composed of dipalmitoylphosphatidylcholine (1,2-dihexadecanoyl-sn-glycero-3-phosphocholine). Involved in the first step of bis(monoacylglycero)phosphate (BMP) de novo synthesis from phosphatidylglycerol (1,2-diacyl-sn-glycero-3-phospho-(1'-sn-glycerol), PG). BMP is an important player in cargo sorting and degradation, regulation of cellular cholesterol levels and intercellular communication. At neutral pH, hydrolyzes the sn-1 fatty acyl group of the lysophosphatidylcholines. The sequence is that of Lysosomal phospholipase A and acyltransferase (PLA2G15) from Canis lupus familiaris (Dog).